We begin with the raw amino-acid sequence, 260 residues long: Putative ATP-binding protein BAB2_1147 (260 aa).

Positions 5–228 (ISFNNVVMRY…DLPYPRTEAI (224 aa)) constitute an ABC transporter domain. 37 to 44 (GPSGCGKS) contacts ATP.

The protein belongs to the ABC transporter superfamily. The complex is composed of two ATP-binding proteins (BAB2_1147), two transmembrane proteins (BAB2_1148) and a solute-binding protein (BAB2_1146).

Its subcellular location is the cell inner membrane. Probably part of an ABC transporter complex. Probably Responsible for energy coupling to the transport system. This Brucella abortus (strain 2308) protein is Putative ATP-binding protein BAB2_1147.